The primary structure comprises 87 residues: Diazepam-binding inhibitor-like 5 (87 aa).

One can recognise an ACB domain in the interval 2–87; the sequence is SQVEFEMACA…VEELKKKEPC (86 aa). An acyl-CoA is bound by residues 29 to 33, Lys-55, and Tyr-74; that span reads YSFYK.

Belongs to the ACBP family. As to expression, exclusively expressed in late spermatids and spermatozoa. Not found in epididymis, spleen, bone marrow, skin, liver, brain, heart, kidney, muscle.

The protein resides in the cytoplasm. Functionally, may be involved in the energy metabolism of the mature sperm. The sequence is that of Diazepam-binding inhibitor-like 5 (Dbil5) from Mus musculus (Mouse).